A 48-amino-acid polypeptide reads, in one-letter code: uncharacterized protein (48 aa).

The helical transmembrane segment at 25–47 threads the bilayer; sequence TFASIGVTVGVQIVILLIWGLSW.

The protein localises to the membrane. This is an uncharacterized protein from Archaeoglobus fulgidus (strain ATCC 49558 / DSM 4304 / JCM 9628 / NBRC 100126 / VC-16).